Consider the following 407-residue polypeptide: Probable tRNA sulfurtransferase (407 aa).

A THUMP domain is found at 61-165 (NEITYRLSKI…LDAIYMYEEV (105 aa)). ATP contacts are provided by residues 183–184 (ML), 208–209 (HF), Arg265, Gly287, and Gln296.

It belongs to the ThiI family.

The protein resides in the cytoplasm. The catalysed reaction is [ThiI sulfur-carrier protein]-S-sulfanyl-L-cysteine + a uridine in tRNA + 2 reduced [2Fe-2S]-[ferredoxin] + ATP + H(+) = [ThiI sulfur-carrier protein]-L-cysteine + a 4-thiouridine in tRNA + 2 oxidized [2Fe-2S]-[ferredoxin] + AMP + diphosphate. It carries out the reaction [ThiS sulfur-carrier protein]-C-terminal Gly-Gly-AMP + S-sulfanyl-L-cysteinyl-[cysteine desulfurase] + AH2 = [ThiS sulfur-carrier protein]-C-terminal-Gly-aminoethanethioate + L-cysteinyl-[cysteine desulfurase] + A + AMP + 2 H(+). The protein operates within cofactor biosynthesis; thiamine diphosphate biosynthesis. Catalyzes the ATP-dependent transfer of a sulfur to tRNA to produce 4-thiouridine in position 8 of tRNAs, which functions as a near-UV photosensor. Also catalyzes the transfer of sulfur to the sulfur carrier protein ThiS, forming ThiS-thiocarboxylate. This is a step in the synthesis of thiazole, in the thiamine biosynthesis pathway. The sulfur is donated as persulfide by IscS. The chain is Probable tRNA sulfurtransferase from Staphylococcus aureus (strain NCTC 8325 / PS 47).